The chain runs to 182 residues: Peptidyl-tRNA hydrolase (182 aa).

Tyrosine 14 contributes to the tRNA binding site. Histidine 19 functions as the Proton acceptor in the catalytic mechanism. TRNA contacts are provided by phenylalanine 64, asparagine 66, and asparagine 112.

Belongs to the PTH family. As to quaternary structure, monomer.

The protein resides in the cytoplasm. It carries out the reaction an N-acyl-L-alpha-aminoacyl-tRNA + H2O = an N-acyl-L-amino acid + a tRNA + H(+). Hydrolyzes ribosome-free peptidyl-tRNAs (with 1 or more amino acids incorporated), which drop off the ribosome during protein synthesis, or as a result of ribosome stalling. In terms of biological role, catalyzes the release of premature peptidyl moieties from peptidyl-tRNA molecules trapped in stalled 50S ribosomal subunits, and thus maintains levels of free tRNAs and 50S ribosomes. The chain is Peptidyl-tRNA hydrolase from Wolbachia sp. subsp. Brugia malayi (strain TRS).